The following is a 291-amino-acid chain: Methylsterol monooxygenase 1-3 (291 aa).

The next 3 helical transmembrane spans lie at 41 to 61 (TILV…IVEW), 92 to 112 (FLLV…MVGI), and 114 to 134 (SGLP…YFLI). The region spanning 128 to 263 (LVVYFLIEDY…FTYCDYIYGT (136 aa)) is the Fatty acid hydroxylase domain. The short motif at 143–147 (HRWMH) is the Histidine box-1 element. The Histidine box-2 signature appears at 156–160 (HRIHH). The helical transmembrane segment at 178–198 (ILILGIPTFLGPAIAPGHIMT) threads the bilayer. The short motif at 235–241 (YHDYHHY) is the Histidine box-3 element.

This sequence belongs to the sterol desaturase family. Interacts with ACBP1. Fe cation is required as a cofactor. As to expression, expressed at low levels in leaves, roots, siliques and flowers.

Its subcellular location is the endoplasmic reticulum membrane. It catalyses the reaction 4,4-dimethyl-5alpha-cholest-7-en-3beta-ol + 6 Fe(II)-[cytochrome b5] + 3 O2 + 5 H(+) = 4alpha-carboxy-4beta-methyl-5alpha-cholest-7-ene-3beta-ol + 6 Fe(III)-[cytochrome b5] + 4 H2O. It carries out the reaction 24-methylidenelophenol + 6 Fe(II)-[cytochrome b5] + 3 O2 + 5 H(+) = 4alpha-carboxy-ergosta-7,24(24(1))-dien-3beta-ol + 6 Fe(III)-[cytochrome b5] + 4 H2O. Functionally, non-heme iron oxygenase involved in sterols biosynthesis by catalyzing the removal of the first methyl group at the C-4 position. 4,4-dimethyl-9-beta,19-cyclopropylsterols such as 24-methylenecycloartanol are the preferred substrates. This chain is Methylsterol monooxygenase 1-3, found in Arabidopsis thaliana (Mouse-ear cress).